A 180-amino-acid chain; its full sequence is Large ribosomal subunit protein uL5 (180 aa).

The protein belongs to the universal ribosomal protein uL5 family. In terms of assembly, part of the 50S ribosomal subunit; part of the 5S rRNA/L5/L18/L25 subcomplex. Contacts the 5S rRNA and the P site tRNA. Forms a bridge to the 30S subunit in the 70S ribosome.

Its function is as follows. This is one of the proteins that bind and probably mediate the attachment of the 5S RNA into the large ribosomal subunit, where it forms part of the central protuberance. In the 70S ribosome it contacts protein S13 of the 30S subunit (bridge B1b), connecting the 2 subunits; this bridge is implicated in subunit movement. Contacts the P site tRNA; the 5S rRNA and some of its associated proteins might help stabilize positioning of ribosome-bound tRNAs. This is Large ribosomal subunit protein uL5 from Ligilactobacillus salivarius (strain UCC118) (Lactobacillus salivarius).